The following is a 337-amino-acid chain: Glycerol-3-phosphate dehydrogenase [NAD(P)+] (337 aa).

4 residues coordinate NADPH: Ser11, Trp12, Arg32, and Lys109. Sn-glycerol 3-phosphate-binding residues include Lys109, Gly140, and Ser142. NADPH is bound at residue Ala144. Sn-glycerol 3-phosphate is bound by residues Lys195, Asp248, Ser258, Arg259, and Asn260. Lys195 functions as the Proton acceptor in the catalytic mechanism. Arg259 is a binding site for NADPH. NADPH-binding residues include Val283 and Glu285.

This sequence belongs to the NAD-dependent glycerol-3-phosphate dehydrogenase family.

The protein localises to the cytoplasm. It catalyses the reaction sn-glycerol 3-phosphate + NAD(+) = dihydroxyacetone phosphate + NADH + H(+). The enzyme catalyses sn-glycerol 3-phosphate + NADP(+) = dihydroxyacetone phosphate + NADPH + H(+). It participates in membrane lipid metabolism; glycerophospholipid metabolism. In terms of biological role, catalyzes the reduction of the glycolytic intermediate dihydroxyacetone phosphate (DHAP) to sn-glycerol 3-phosphate (G3P), the key precursor for phospholipid synthesis. In Limosilactobacillus fermentum (strain NBRC 3956 / LMG 18251) (Lactobacillus fermentum), this protein is Glycerol-3-phosphate dehydrogenase [NAD(P)+].